A 335-amino-acid chain; its full sequence is MMFPGLLAPPAGYPSLLRPTPTLTLPQSLQSAFSGHSSFLVEDLIRISRPPTYLSRSIPAASLSPPSQEAPAALADSGTSDLGSPGSGSRRGSSPQTALSPASEPTFLKFGVNAILSSAPRRETSPALLQSPPPKTFAFPYFEGSFQPFIRSSYFPASSSVVPIPGTFSWPLAARGKPRRGMLRRAVFSDVQRKALEKTFQKQKYISKPDRKKLASKLGLKDSQVKIWFQNRRMKWRNSKERELLSSGGCREQTLPTKLNPHPDLSDVGQKGPGDEEEDNPGARLAYHAPADPRHLLEGPLPASPAHSSSPGKPSDFSDSDEDEEGEEDEEITVS.

Disordered stretches follow at residues 58-102 (IPAA…LSPA) and 240-335 (KERE…ITVS). A compositionally biased stretch (low complexity) spans 83-95 (GSPGSGSRRGSSP). Residues 181–240 (GMLRRAVFSDVQRKALEKTFQKQKYISKPDRKKLASKLGLKDSQVKIWFQNRRMKWRNSK) constitute a DNA-binding region (homeobox). Positions 299-317 (GPLPASPAHSSSPGKPSDF) are enriched in low complexity. Acidic residues predominate over residues 318–335 (SDSDEDEEGEEDEEITVS).

The protein belongs to the H2.0 homeobox family.

It is found in the nucleus. Its function is as follows. Could have a role in patterning the central nervous system during embryogenesis. Has a key role in regulating the distinct phenotypic features that distinguish two major classes of ventral interneurons, V0 and V1 neurons. Regulates the transcription factor profile, neurotransmitter phenotype, intraspinal migratory path and axonal trajectory of V0 neurons, features that differentiate them from an adjacent set of V1 neurons. The protein is Homeobox protein DBX1 (Dbx1) of Mus musculus (Mouse).